The following is an 88-amino-acid chain: Sec-independent protein translocase protein TatA (88 aa).

Residues 1 to 21 traverse the membrane as a helical segment; that stretch reads MNLGPTEILLILVIVVLLFGA. Positions 46-56 are enriched in basic and acidic residues; it reads SNDDQRYEEQQ. Residues 46–88 form a disordered region; that stretch reads SNDDQRYEEQQQQRQIAAQAQQQVVNPVEIPQPQPTDIQRPQQ. Residues 57-68 show a composition bias toward low complexity; it reads QQRQIAAQAQQQ.

Belongs to the TatA/E family. As to quaternary structure, the Tat system comprises two distinct complexes: a TatABC complex, containing multiple copies of TatA, TatB and TatC subunits, and a separate TatA complex, containing only TatA subunits. Substrates initially bind to the TatABC complex, which probably triggers association of the separate TatA complex to form the active translocon.

The protein resides in the cell membrane. In terms of biological role, part of the twin-arginine translocation (Tat) system that transports large folded proteins containing a characteristic twin-arginine motif in their signal peptide across membranes. TatA could form the protein-conducting channel of the Tat system. The polypeptide is Sec-independent protein translocase protein TatA (Corynebacterium diphtheriae (strain ATCC 700971 / NCTC 13129 / Biotype gravis)).